Reading from the N-terminus, the 464-residue chain is Spore coat protein SP65 (464 aa).

A signal peptide spans 1-17; sequence MKVLLLLVCLVFAYVNA. Residues 21–43 enclose the Follistatin-like 1 domain; it reads ACYNVVCPSNYQCRAEGDQAYCV. N-linked (GlcNAc...) asparagine glycosylation is present at asparagine 111. 2 consecutive Follistatin-like domains span residues 121 to 143 and 151 to 173; these read VCRDFQCPVGTHCFNGERGPHCV and LCRVTKCSYDFTCKMVRGNPTCL. N-linked (GlcNAc...) asparagine glycosylation occurs at asparagine 247. Residues 250 to 320 are disordered; it reads STTGATTGAT…STTGAATTAP (71 aa).

In terms of assembly, binds to the C-terminal region of pspB.

The protein localises to the spore wall. Forms a triad with cellulose and pspB that is essential for spore outer layer formation. The polypeptide is Spore coat protein SP65 (cotE) (Dictyostelium discoideum (Social amoeba)).